The following is a 551-amino-acid chain: Cilia- and flagella-associated protein 45 (551 aa).

Disordered regions lie at residues 1–30 and 461–489; these read MPLS…TKAV and RLEE…QQKE. The stretch at 157–526 forms a coiled coil; it reads NNNKKLSDLE…IKRKKLEELR (370 aa).

It belongs to the CFAP45 family. In terms of assembly, microtubule inner protein component of sperm flagellar doublet microtubules. Interacts with AK8; dimerization with AK8 may create a cavity at the interface of the dimer that can accommodate AMP. Interacts with CFAP52. Interacts with ENKUR. Directly interacts with DNALI1. Interacts with DNAH11. Interacts with DNAI1. Expressed in respiratory cells and in sperm (at protein level). Expressed in nasopharyngeal epithelium and trachea.

It localises to the cytoplasm. The protein localises to the cytoskeleton. Its subcellular location is the cilium axoneme. The protein resides in the flagellum axoneme. It is found in the cell projection. It localises to the cilium. The protein localises to the flagellum. In terms of biological role, microtubule inner protein (MIP) part of the dynein-decorated doublet microtubules (DMTs) in cilia axoneme, which is required for motile cilia beating. It is an AMP-binding protein that may facilitate dynein ATPase-dependent ciliary and flagellar beating via adenine nucleotide homeostasis. May function as a donor of AMP to AK8 and hence promote ADP production. This Homo sapiens (Human) protein is Cilia- and flagella-associated protein 45.